The primary structure comprises 450 residues: F-box protein KIB3 (450 aa).

Residues 20–50 (DLVRLILERLSFVDFHRARCVSSTWYVASKS) form the F-box domain.

It is found in the cytoplasm. It localises to the nucleus. The protein localises to the nucleolus. Functionally, component of SCF(ASK-cullin-F-box) E3 ubiquitin ligase complexes, which may mediate the ubiquitination and subsequent proteasomal degradation of target proteins. Required for brassinosteroid (BR) signal transduction. Mediates ASK7/BIN2/SK21 inactivation both by competing with substrate binding (e.g. BZR1) and by promoting its ubiquitination and subsequent proteasomal degradation. In Arabidopsis thaliana (Mouse-ear cress), this protein is F-box protein KIB3.